Consider the following 239-residue polypeptide: Transcriptional regulatory protein BtsR (239 aa).

Residues 3 to 116 (KVLIVDDEPL…RLEKTLARLR (114 aa)) enclose the Response regulatory domain. Asp54 is subject to 4-aspartylphosphate. Residues 137 to 239 (IPCTGHSRIY…LKSLKEAIGL (103 aa)) enclose the HTH LytTR-type domain.

Phosphorylated by BtsS.

In terms of biological role, member of the two-component regulatory system BtsS/BtsR. BtsR regulates expression of btsT by binding to its promoter region. This Escherichia coli O6:H1 (strain CFT073 / ATCC 700928 / UPEC) protein is Transcriptional regulatory protein BtsR.